The primary structure comprises 154 residues: 20 kDa calcium-binding protein (154 aa).

4 EF-hand domains span residues 13–48 (DQVK…LNLT), 49–84 (VKPD…KLQE), 86–121 (QDER…LGDD), and 122–154 (LTEE…MTSE). 11 residues coordinate Ca(2+): aspartate 62, aspartate 64, threonine 66, aspartate 99, asparagine 101, glutamate 105, aspartate 110, aspartate 135, aspartate 137, serine 139, and glutamate 146.

It localises to the tegument membrane. Functionally, calcium-binding protein. The sequence is that of 20 kDa calcium-binding protein (SM20) from Schistosoma mansoni (Blood fluke).